The chain runs to 906 residues: Translation initiation factor IF-2 (906 aa).

3 disordered regions span residues 94–125 (APEKTEVIPEETENTVEESTAAETVESEPETA), 165–232 (ESEA…TGKK), and 270–321 (RQEQ…SSEV). Composition is skewed to basic and acidic residues over residues 165-176 (ESEAEKGTEIEK), 222-232 (GPAEARETGKK), and 270-284 (RQEQKRREEAKKREA). The segment covering 299-313 (QQRRSLKRGGKRKKY) has biased composition (basic residues). The tr-type G domain maps to 405 to 574 (ERPPVITIMG…LLQAEMMELK (170 aa)). A G1 region spans residues 414-421 (GHVDHGKT). GTP is bound at residue 414–421 (GHVDHGKT). A G2 region spans residues 439-443 (GITQH). Residues 460–463 (DTPG) form a G3 region. GTP-binding positions include 460-464 (DTPGH) and 514-517 (NKMD). Residues 514-517 (NKMD) are G4. Residues 550 to 552 (SAH) are G5.

This sequence belongs to the TRAFAC class translation factor GTPase superfamily. Classic translation factor GTPase family. IF-2 subfamily.

The protein localises to the cytoplasm. One of the essential components for the initiation of protein synthesis. Protects formylmethionyl-tRNA from spontaneous hydrolysis and promotes its binding to the 30S ribosomal subunits. Also involved in the hydrolysis of GTP during the formation of the 70S ribosomal complex. This chain is Translation initiation factor IF-2, found in Sulfurovum sp. (strain NBC37-1).